The sequence spans 395 residues: Acid ceramidase (395 aa).

The first 21 residues, Met1 to Ala21, serve as a signal peptide directing secretion. Cys31 and Cys340 are oxidised to a cystine. Cys143 acts as the Nucleophile in catalysis. N-linked (GlcNAc...) asparagine glycans are attached at residues Asn173, Asn195, Asn259, Asn286, Asn342, and Asn348. Residues Cys388 and Cys392 are joined by a disulfide bond.

Belongs to the acid ceramidase family. Heterodimer; disulfide-linked. The heterodimer is composed of the disulfide-linked alpha and beta chains produced by autocatalytic cleavage of the precursor. Isoform 2: May interact with NR5A1 in the nucleus; the direct interaction would negatively regulate NR5A1 transcriptional activity. In terms of processing, N-glycosylated. Proteolytically cleaved into two chains alpha and beta that remain associated via a disulfide bond. Cleavage gives rise to a conformation change that activates the enzyme. The same catalytic Cys residue mediates the autoproteolytic cleavage and subsequent hydrolysis of lipid substrates. The beta chain may undergo an additional C-terminal processing. As to expression, broadly expressed with higher expression in heart.

The protein resides in the lysosome. It localises to the secreted. It is found in the nucleus. Its subcellular location is the cytoplasm. The enzyme catalyses an N-acylsphing-4-enine + H2O = sphing-4-enine + a fatty acid. The catalysed reaction is a beta-D-glucosyl-(1&lt;-&gt;1')-N-acylsphing-4-enine + H2O = beta-D-glucosyl-(1&lt;-&gt;1)-sphing-4-enine + a fatty acid. It carries out the reaction a globoside Gb3Cer + H2O = a lysoGb3 + a fatty acid. It catalyses the reaction a globoside Gb3Cer (d18:1(4E)) + H2O = a lysoGb3(d18:1(4E)) + a fatty acid. The enzyme catalyses N-dodecanoylsphing-4-enine + H2O = dodecanoate + sphing-4-enine. The catalysed reaction is N-tetradecanoylsphing-4-enine + H2O = tetradecanoate + sphing-4-enine. It carries out the reaction N-hexadecanoylsphing-4-enine + H2O = sphing-4-enine + hexadecanoate. It catalyses the reaction N-octadecanoylsphing-4-enine + H2O = sphing-4-enine + octadecanoate. The enzyme catalyses N-dodecanoyl-(4R)-hydroxysphinganine + H2O = (4R)-hydroxysphinganine + dodecanoate. The catalysed reaction is N-(dodecanoyl)-sphinganine + H2O = dodecanoate + sphinganine. It carries out the reaction N-(acetyl)-sphing-4-enine + H2O = sphing-4-enine + acetate. It catalyses the reaction N-(hexanoyl)sphing-4-enine + H2O = hexanoate + sphing-4-enine. The enzyme catalyses N-octanoylsphing-4-enine + H2O = octanoate + sphing-4-enine. The catalysed reaction is N-(9Z-octadecenoyl)-sphing-4-enine + H2O = sphing-4-enine + (9Z)-octadecenoate. It carries out the reaction N-dodecanoylethanolamine + H2O = dodecanoate + ethanolamine. Its pathway is lipid metabolism; sphingolipid metabolism. Its activity is regulated as follows. Activated by Ca(2+), Mg(2+) and Na(+) cations. Inhibited by Zn(2+). Phosphatidylserine and phosphatidic acid stimulate while cardiolipin, phosphatidylcholine, lysophosphatidylcholine, phosphatidylethanolamine, phosphatidylinositol and sphingomyelin inhibit the reverse ceramide synthase activity. Phosphatidic acid, phosphatidylinositol and C16-ceramide inhibit the ceramidase/hydrolase activity. In terms of biological role, lysosomal ceramidase that hydrolyzes sphingolipid ceramides into sphingosine and free fatty acids at acidic pH. Ceramides, sphingosine, and its phosphorylated form sphingosine-1-phosphate are bioactive lipids that mediate cellular signaling pathways regulating several biological processes including cell proliferation, apoptosis and differentiation. Has a higher catalytic efficiency towards C12-ceramides versus other ceramides. Also catalyzes the reverse reaction allowing the synthesis of ceramides from fatty acids and sphingosine. For the reverse synthetic reaction, the natural sphingosine D-erythro isomer is more efficiently utilized as a substrate compared to D-erythro-dihydrosphingosine and D-erythro-phytosphingosine, while the fatty acids with chain lengths of 12 or 14 carbons are the most efficiently used. Also has an N-acylethanolamine hydrolase activity. By regulating the levels of ceramides, sphingosine and sphingosine-1-phosphate in the epidermis, mediates the calcium-induced differentiation of epidermal keratinocytes. Also indirectly regulates tumor necrosis factor/TNF-induced apoptosis. By regulating the intracellular balance between ceramides and sphingosine, in adrenocortical cells, probably also acts as a regulator of steroidogenesis. Its function is as follows. May directly regulate steroidogenesis by binding the nuclear receptor NR5A1 and negatively regulating its transcriptional activity. This chain is Acid ceramidase, found in Homo sapiens (Human).